Here is a 137-residue protein sequence, read N- to C-terminus: Large ribosomal subunit protein eL28 (137 aa).

S2 carries the N-acetylserine modification. Glycyl lysine isopeptide (Lys-Gly) (interchain with G-Cter in SUMO2) cross-links involve residues K58 and K65. A Phosphoserine modification is found at S115.

Belongs to the eukaryotic ribosomal protein eL28 family. As to quaternary structure, component of the large ribosomal subunit.

It is found in the cytoplasm. Its function is as follows. Component of the large ribosomal subunit. The ribosome is a large ribonucleoprotein complex responsible for the synthesis of proteins in the cell. This chain is Large ribosomal subunit protein eL28 (RPL28), found in Homo sapiens (Human).